Consider the following 282-residue polypeptide: Pantothenate synthetase (282 aa).

30–37 (MGALHAGH) lines the ATP pocket. Histidine 37 serves as the catalytic Proton donor. Glutamine 61 contributes to the (R)-pantoate binding site. Residue glutamine 61 participates in beta-alanine binding. 147-150 (GEKD) is a binding site for ATP. Position 153 (glutamine 153) interacts with (R)-pantoate. ATP contacts are provided by residues valine 176 and 184–187 (LSSR).

Belongs to the pantothenate synthetase family. In terms of assembly, homodimer.

It is found in the cytoplasm. It carries out the reaction (R)-pantoate + beta-alanine + ATP = (R)-pantothenate + AMP + diphosphate + H(+). It functions in the pathway cofactor biosynthesis; (R)-pantothenate biosynthesis; (R)-pantothenate from (R)-pantoate and beta-alanine: step 1/1. Catalyzes the condensation of pantoate with beta-alanine in an ATP-dependent reaction via a pantoyl-adenylate intermediate. In Bacteroides fragilis (strain YCH46), this protein is Pantothenate synthetase.